Here is a 348-residue protein sequence, read N- to C-terminus: Protein arginine N-methyltransferase 1 (348 aa).

The region spanning 20 to 322 (EQHYFNSYDH…EKNNRDLNIK (303 aa)) is the SAM-dependent MTase PRMT-type domain. The S-adenosyl-L-methionine site is built by His33, Arg42, Gly66, Asp88, and Glu117. Residues Glu132 and Glu141 contribute to the active site.

Belongs to the class I-like SAM-binding methyltransferase superfamily. Protein arginine N-methyltransferase family. In terms of assembly, homodimer. The dimers can then associate to form a ring-shaped homohexamer. Interacts with NPL3, BRE5, MTR4, SNF2, SUM1, and SSD1.

The protein localises to the nucleus. The catalysed reaction is L-arginyl-[protein] + S-adenosyl-L-methionine = N(omega)-methyl-L-arginyl-[protein] + S-adenosyl-L-homocysteine + H(+). It carries out the reaction L-arginyl-[protein] + 2 S-adenosyl-L-methionine = N(omega),N(omega)-dimethyl-L-arginyl-[protein] + 2 S-adenosyl-L-homocysteine + 2 H(+). Functionally, S-adenosyl-L-methionine-dependent protein-arginine N-methyltransferase that catalyzes both the mono- and asymmetric (type I) dimethylation of the guanidino nitrogens of arginine residues in a variety of RNA-binding proteins such as heterogeneous nuclear ribonucleoproteins (hnRNPs) and small nuclear ribonucleoproteins (snRNPs). Methylates NAB2, NPL3, HRP1 and YRA1, shuttling hnRNPs involved in mRNA processing and export, facilitating their export out of the nucleus. Methylation of NPL3 weakens its interaction with THO2, a component of the TREX (transcription/export) complex important for transcriptional elongation and recruitment of mRNA export factors. Methylates the hnRNP HRB1, but does not influence its subcellular location. Methylates the nucleolar proteins GAR1, NOP1 and NSR1. Methylates the snRNP SNP1 and modulates the cotranscriptional recruitment of splicing factors. Dimethylates free histone H4 (HHF1/HHF2) at 'Arg-4' (H4R3me2a) and plays a role in preservation and establishment of silent chromatin domains. Mono- and dimethylates ribosomal protein S2 (RPS2) at 'Arg-11'. Methylates the catalytic subunit of the SWI/SNF chromatin-remodeling complex SNF2. The sequence is that of Protein arginine N-methyltransferase 1 from Saccharomyces cerevisiae (strain ATCC 204508 / S288c) (Baker's yeast).